A 123-amino-acid chain; its full sequence is uncharacterized protein (123 aa).

Residues 5–25 (GTLVILFAIILILCIMLLFYY) traverse the membrane as a helical segment.

It belongs to the asfivirus CP123L family.

It is found in the host membrane. The protein resides in the virion. This is an uncharacterized protein from Ornithodoros (relapsing fever ticks).